We begin with the raw amino-acid sequence, 131 residues long: Large ribosomal subunit protein bL17 (131 aa).

It belongs to the bacterial ribosomal protein bL17 family. As to quaternary structure, part of the 50S ribosomal subunit. Contacts protein L32.

The chain is Large ribosomal subunit protein bL17 from Oenococcus oeni (strain ATCC BAA-331 / PSU-1).